A 902-amino-acid chain; its full sequence is Probable leucine--tRNA ligase, mitochondrial (902 aa).

Lys67 bears the N6-acetyllysine mark. Residues 91–101 (YPSGKLHMGHV) carry the 'HIGH' region motif. Residue Lys235 is modified to N6-acetyllysine. The 'KMSKS' region motif lies at 638–642 (KMSKS). An ATP-binding site is contributed by Lys641.

The protein belongs to the class-I aminoacyl-tRNA synthetase family.

It is found in the mitochondrion matrix. The catalysed reaction is tRNA(Leu) + L-leucine + ATP = L-leucyl-tRNA(Leu) + AMP + diphosphate. This is Probable leucine--tRNA ligase, mitochondrial (Lars2) from Mus musculus (Mouse).